Consider the following 158-residue polypeptide: Probable flavodoxin 1 (158 aa).

The Flavodoxin-like domain maps to 4 to 144 (ALITYASMSG…SCRAFARGFL (141 aa)).

It belongs to the flavodoxin family. Requires FMN as cofactor.

In terms of biological role, low-potential electron donor to a number of redox enzymes. In Bacillus subtilis (strain 168), this protein is Probable flavodoxin 1 (ykuN).